The primary structure comprises 172 residues: Conglutin-7 (172 aa).

Residues 1–21 (MAKLTILVALALFLLAAHASA) form the signal peptide. 4 disulfide bridges follow: Cys-33/Cys-116, Cys-45/Cys-103, Cys-104/Cys-152, and Cys-118/Cys-160. The disordered stretch occupies residues 54-98 (QRDEDSYGRDPYSPSQDPYSPSQDPDRRDPYSPSPYDRRGAGSSQ). Over residues 62-76 (RDPYSPSQDPYSPSQ) the composition is skewed to low complexity. 4-hydroxyproline occurs at positions 67, 74, and 86. Positions 77–98 (DPDRRDPYSPSPYDRRGAGSSQ) are enriched in basic and acidic residues.

Belongs to the 2S seed storage albumins family. The hydroxyproline modifications determined by mass spectrometry are probably 4-hydroxyproline as determined for other extracellular plant proteins. Expressed in seeds, not expressed in leaves, roots and pegs.

Its function is as follows. Weak inhibitor of trypsin. This chain is Conglutin-7, found in Arachis hypogaea (Peanut).